A 336-amino-acid chain; its full sequence is Inositol 2-dehydrogenase (336 aa).

The protein belongs to the Gfo/Idh/MocA family. Homotetramer.

It carries out the reaction myo-inositol + NAD(+) = scyllo-inosose + NADH + H(+). Involved in the oxidation of myo-inositol (MI) to 2-keto-myo-inositol (2KMI or 2-inosose). The polypeptide is Inositol 2-dehydrogenase (Pseudomonas fluorescens (strain SBW25)).